The following is a 246-amino-acid chain: Probable transcriptional regulatory protein GK2594 (246 aa).

It belongs to the TACO1 family.

It localises to the cytoplasm. In Geobacillus kaustophilus (strain HTA426), this protein is Probable transcriptional regulatory protein GK2594.